Consider the following 215-residue polypeptide: MRKGKRVIKKIEEKIKRQVTFAKRKKSLIKKAYELSVLCDVHLGLIIFSHSNRLYDFCSNSTSMENLIMRYQKEKEGQTTAEHSFHSDQCSDCVKTKESMMREIENLKLNLQLYDGHGLNLLTYDELLSFELHLESSLQHARARKSEFMHQQQQQQTDQKLKGKEKGQGSSWEQLMWQAERQMMTCQRQKDPAPANEGGVPFLRWGTTHRRSSPP.

An MADS-box domain is found at 1-61 (MRKGKRVIKK…NRLYDFCSNS (61 aa)). The 89-residue stretch at 90–178 (CSDCVKTKES…GSSWEQLMWQ (89 aa)) folds into the K-box domain. Disordered stretches follow at residues 143–172 (ARKSEFMHQQQQQQTDQKLKGKEKGQGSSW) and 184–215 (MTCQRQKDPAPANEGGVPFLRWGTTHRRSSPP).

As to quaternary structure, forms homodimer. Interacts with AGL16. In terms of tissue distribution, expressed in bud pedicels, petals, anthers, style, ovary, seeds and embryos.

The protein resides in the nucleus. In terms of biological role, probable transcription factor involved in the regulation of fruit growth. Contributes to integument development. Controls organ size via cell expansion. Involved in the regulation of longitudinal growth of the fruit evenly throughout the radial axis. Functions redundantly with TT16/AGL32 to repress nucellus growth and promote its degeneration. The chain is Agamous-like MADS-box protein AGL63 from Arabidopsis thaliana (Mouse-ear cress).